Consider the following 155-residue polypeptide: Transcriptional repressor NrdR (155 aa).

The segment at 3–34 (CPKCDHNGTRVLDSRPVQDHYSIRRRRECEKC) is a zinc-finger region. Residues 49 to 139 (LIIVKKDGNR…VYRQFKDITV (91 aa)) form the ATP-cone domain.

Belongs to the NrdR family. Zn(2+) serves as cofactor.

In terms of biological role, negatively regulates transcription of bacterial ribonucleotide reductase nrd genes and operons by binding to NrdR-boxes. This Exiguobacterium sp. (strain ATCC BAA-1283 / AT1b) protein is Transcriptional repressor NrdR.